We begin with the raw amino-acid sequence, 1324 residues long: Probable phosphoribosylformylglycinamidine synthase (1324 aa).

ATP contacts are provided by residues Gly314–Asp325, Ser394–Phe396, and Ala681. Mg(2+) is bound by residues Asp682, Glu721, Asn725, and Asp894. Position 896 (Ser896) interacts with ATP. A Glutamine amidotransferase type-1 domain is found at Arg1053 to Glu1295. Cys1146 serves as the catalytic Nucleophile. Catalysis depends on residues His1280 and Asp1282.

The protein in the N-terminal section; belongs to the FGAMS family.

It localises to the cytoplasm. It catalyses the reaction N(2)-formyl-N(1)-(5-phospho-beta-D-ribosyl)glycinamide + L-glutamine + ATP + H2O = 2-formamido-N(1)-(5-O-phospho-beta-D-ribosyl)acetamidine + L-glutamate + ADP + phosphate + H(+). It functions in the pathway purine metabolism; IMP biosynthesis via de novo pathway; 5-amino-1-(5-phospho-D-ribosyl)imidazole from N(2)-formyl-N(1)-(5-phospho-D-ribosyl)glycinamide: step 1/2. Its function is as follows. Phosphoribosylformylglycinamidine synthase involved in the purines biosynthetic pathway. Catalyzes the ATP-dependent conversion of formylglycinamide ribonucleotide (FGAR) and glutamine to yield formylglycinamidine ribonucleotide (FGAM) and glutamate. The chain is Probable phosphoribosylformylglycinamidine synthase from Caenorhabditis elegans.